Here is a 636-residue protein sequence, read N- to C-terminus: MTEVKQYPGRDYDVIVVGAGHAGSEAALAAARMGNRTLLMTINLDMVAFMPCNPSVGGPAKGIVVREIDALGGEMGRNIDKTYVQMRMLNTGKGPAVRALRAQADKHAYHAEMKHTIEREPNLTLRQGIVDGLIVEDGVCKGVITNTGARYSAKSVVLTTGTAARGKIIIGELMYSSGPNNSQPAMKLSGDLERLGFNLERFKTGTPPRVDGNTIDYSVTEEQPGDPEPHHFSFETKDADYIDLKHQLSCWLTYTNETTHKIIRENLDRAPMFTGVIEGVGPRYCPSIEDKIVRFADKKRHQLFLEPEGRNTDEWYVQGLSTSMPEEVQQRILHSIKGLEDAEMMRPGYAIEYDVVAPYQLKATLETKLVKNLYTAGQTNGTSGYEEAAGQGLIAGINAGLRALDRGQFTLKRSDAYIGVMIDDLVTKGTNEPYRLLTSRAEYRLILRHDNADLRLTDKGRELGLIDDERYAAFEAKRQAIKNELDRLGKIRIKPNDEVNAFLRAHNSGELKDGVLAADFLKRPEVQYADLMKFIPAAPEPLERHVIEQVEIQIKYAGYIQKAEERVDRLKKMEAKKIPDRIDYDAIDGLATEAHQKLKKIQPTTIAQASRISGVNPADIAILSVYIQQGRIAKVQ.

18 to 23 (GAGHAG) contributes to the FAD binding site. Position 281–295 (281–295 (GPRYCPSIEDKIVRF)) interacts with NAD(+).

This sequence belongs to the MnmG family. In terms of assembly, homodimer. Heterotetramer of two MnmE and two MnmG subunits. The cofactor is FAD.

It is found in the cytoplasm. Functionally, NAD-binding protein involved in the addition of a carboxymethylaminomethyl (cmnm) group at the wobble position (U34) of certain tRNAs, forming tRNA-cmnm(5)s(2)U34. The sequence is that of tRNA uridine 5-carboxymethylaminomethyl modification enzyme MnmG from Lactiplantibacillus plantarum (strain ATCC BAA-793 / NCIMB 8826 / WCFS1) (Lactobacillus plantarum).